The primary structure comprises 176 residues: Ribosome rescue factor SmrB (176 aa).

The 76-residue stretch at 93 to 168 (LDLHGYRQSE…GDAALLVLID (76 aa)) folds into the Smr domain.

Belongs to the SmrB family. As to quaternary structure, associates with collided ribosomes, but not with correctly translating polysomes.

Acts as a ribosome collision sensor. Detects stalled/collided disomes (pairs of ribosomes where the leading ribosome is stalled and a second ribosome has collided with it) and endonucleolytically cleaves mRNA at the 5' boundary of the stalled ribosome. Stalled/collided disomes form a new interface (primarily via the 30S subunits) that binds SmrB. Cleaved mRNA becomes available for tmRNA ligation, leading to ribosomal subunit dissociation and rescue of stalled ribosomes. This is Ribosome rescue factor SmrB from Shewanella sp. (strain ANA-3).